A 171-amino-acid polypeptide reads, in one-letter code: Methylated-DNA--protein-cysteine methyltransferase (171 aa).

Residue Cys139 is the Nucleophile; methyl group acceptor of the active site.

Belongs to the MGMT family.

It is found in the cytoplasm. It catalyses the reaction a 6-O-methyl-2'-deoxyguanosine in DNA + L-cysteinyl-[protein] = S-methyl-L-cysteinyl-[protein] + a 2'-deoxyguanosine in DNA. It carries out the reaction a 4-O-methyl-thymidine in DNA + L-cysteinyl-[protein] = a thymidine in DNA + S-methyl-L-cysteinyl-[protein]. Its function is as follows. Involved in the cellular defense against the biological effects of O6-methylguanine (O6-MeG) and O4-methylthymine (O4-MeT) in DNA. Repairs the methylated nucleobase in DNA by stoichiometrically transferring the methyl group to a cysteine residue in the enzyme. This is a suicide reaction: the enzyme is irreversibly inactivated. This Shigella flexneri protein is Methylated-DNA--protein-cysteine methyltransferase.